Consider the following 415-residue polypeptide: Casein kinase I isoform delta (415 aa).

A Protein kinase domain is found at 9–277 (YRLGRKIGSG…YLRQLFRNLF (269 aa)). ATP-binding positions include 15 to 23 (IGSGSFGDI) and Lys38. Asp128 functions as the Proton acceptor in the catalytic mechanism. A compositionally biased stretch (basic and acidic residues) spans 301-315 (AEDAERERREREERL). The tract at residues 301–415 (AEDAERERRE…SSGLPSTVHR (115 aa)) is disordered. The segment at 317 to 342 (HTRNPAVRGLPSTASGRLRGTQEVTP) is autoinhibitory. Over residues 341–352 (TPSTPLTPTSHT) the composition is skewed to low complexity. The span at 380–415 (NVSSSDLTSRQDTSRMSTSQIPSRVTSSGLPSTVHR) shows a compositional bias: polar residues.

It belongs to the protein kinase superfamily. As to quaternary structure, monomer. Interacts with per1 and per2. Component of the circadian core oscillator. Post-translationally, autophosphorylated on serine and threonine residues. In terms of tissue distribution, detected in retina photoreceptor cells.

The protein resides in the cytoplasm. It localises to the nucleus. It carries out the reaction L-seryl-[protein] + ATP = O-phospho-L-seryl-[protein] + ADP + H(+). The enzyme catalyses L-threonyl-[protein] + ATP = O-phospho-L-threonyl-[protein] + ADP + H(+). It catalyses the reaction L-seryl-[tau protein] + ATP = O-phospho-L-seryl-[tau protein] + ADP + H(+). The catalysed reaction is L-threonyl-[tau protein] + ATP = O-phospho-L-threonyl-[tau protein] + ADP + H(+). Its activity is regulated as follows. Exhibits substrate-dependent heparin activation. Its function is as follows. Casein kinases are operationally defined by their preferential utilization of acidic proteins such as caseins as substrates. Can phosphorylate a large number of proteins. Central component of the circadian clock. May act as a negative regulator of circadian rhythmicity by phosphorylating per1 and per2, which may lead to their degradation. Participates in wnt signaling. Has no kinase activity. This is Casein kinase I isoform delta (csnk1d) from Xenopus laevis (African clawed frog).